The chain runs to 333 residues: MEAAHFFEGTEKLLEVWFSRQQSDASQGSGDLRTIPRSEWDVLLKDVQCSIISVTKTDKQEAYVLSESSMFVSKRRFILKTCGTTLLLKALVPLLKLARDYSGFDSIQSFFYSRKNFMKPSHQGYPHRNFQEEIEFLNAIFPNGAAYCMGRMNSDCWYLYTLDLPESRVINQPDQTLEILMSELDPAVMDQFYMKDGVTAKDVTRESGIRDLIPGSVIDATLFNPCGYSMNGMKSDGTYWTIHITPEPEFSYVSFETNLSQTSYDDLIRKVVEVFKPGKFVTTLFVNQSSKCRTVLSSPQKIDGFKRLDCQSAMFNDYNFVFTSFAKKQQQQS.

Position 7 (F7) interacts with substrate. Residues E8 and E11 contribute to the active site. Residue E67 coordinates substrate. S68 functions as the Schiff-base intermediate with substrate; via pyruvic acid in the catalytic mechanism. Position 68 is a pyruvic acid (Ser); by autocatalysis (S68). C82 functions as the Proton donor; for catalytic activity in the catalytic mechanism. Position 223 (F223) interacts with substrate. Active-site proton acceptor; for processing activity residues include S229 and H243. A substrate-binding site is contributed by E247. S298 carries the phosphoserine modification.

This sequence belongs to the eukaryotic AdoMetDC family. As to quaternary structure, heterotetramer of two alpha and two beta chains. Requires pyruvate as cofactor. Post-translationally, is synthesized initially as an inactive proenzyme. Formation of the active enzyme involves a self-maturation process in which the active site pyruvoyl group is generated from an internal serine residue via an autocatalytic post-translational modification. Two non-identical subunits are generated from the proenzyme in this reaction, and the pyruvate is formed at the N-terminus of the alpha chain, which is derived from the carboxyl end of the proenzyme. The post-translation cleavage follows an unusual pathway, termed non-hydrolytic serinolysis, in which the side chain hydroxyl group of the serine supplies its oxygen atom to form the C-terminus of the beta chain, while the remainder of the serine residue undergoes an oxidative deamination to produce ammonia and the pyruvoyl group blocking the N-terminus of the alpha chain.

It carries out the reaction S-adenosyl-L-methionine + H(+) = S-adenosyl 3-(methylsulfanyl)propylamine + CO2. The protein operates within amine and polyamine biosynthesis; S-adenosylmethioninamine biosynthesis; S-adenosylmethioninamine from S-adenosyl-L-methionine: step 1/1. Its function is as follows. Essential for biosynthesis of the polyamines spermidine and spermine. Promotes maintenance and self-renewal of embryonic stem cells, by maintaining spermine levels. In Rattus norvegicus (Rat), this protein is S-adenosylmethionine decarboxylase proenzyme (Amd1).